A 39-amino-acid chain; its full sequence is Photosystem II reaction center protein Y (39 aa).

A helical transmembrane segment spans residues 7–25 (VLVVLLPVLLAGGWALKNI).

It belongs to the PsbY family. As to quaternary structure, PSII is composed of 1 copy each of membrane proteins PsbA, PsbB, PsbC, PsbD, PsbE, PsbF, PsbH, PsbI, PsbJ, PsbK, PsbL, PsbM, PsbT, PsbX, PsbY, PsbZ, Psb30/Ycf12, peripheral proteins PsbO, CyanoQ (PsbQ), PsbU, PsbV and a large number of cofactors. It forms dimeric complexes.

It localises to the cellular thylakoid membrane. Loosely associated component of the core of photosystem II (PSII), it is not always seen in crystals. PSII is a light-driven water plastoquinone oxidoreductase, using light energy to abstract electrons from H(2)O, generating a proton gradient subsequently used for ATP formation. This is Photosystem II reaction center protein Y from Cyanothece sp. (strain PCC 7425 / ATCC 29141).